We begin with the raw amino-acid sequence, 257 residues long: DNA repair protein RecO (257 aa).

This sequence belongs to the RecO family.

Its function is as follows. Involved in DNA repair and RecF pathway recombination. In Variovorax paradoxus (strain S110), this protein is DNA repair protein RecO.